The sequence spans 310 residues: MILTLTLNPSVDISYPLDQFNLDTVNRVSQTSKTAGGKGLNVTRVLSEFGEDVIASGFLGGALGQYIEEQIETTRIKQAFFKIKGETRNCIAILHEGQQTEILEKGPTIELKESEEFKSHLLKLFKETDVAVMSGSLPKGLNTDYYADIVRLAKEQGILTILDSSGQSLEEVLISNVKPTVIKPNIDELSQLLNYKVTNDIKELKAAVSQPIFNDIEWIIVSLGSEGAFAKHNQKFYKVNIPNIKVVNPVGSGDSTVAGIASGLIHQQTDEELLKKANAFGMLNAMEQQTGHINTDKFDEIFKQIEVIEV.

The protein belongs to the carbohydrate kinase PfkB family. LacC subfamily.

The catalysed reaction is D-tagatofuranose 6-phosphate + ATP = D-tagatofuranose 1,6-bisphosphate + ADP + H(+). Its pathway is carbohydrate metabolism; D-tagatose 6-phosphate degradation; D-glyceraldehyde 3-phosphate and glycerone phosphate from D-tagatose 6-phosphate: step 1/2. This Staphylococcus epidermidis (strain ATCC 35984 / DSM 28319 / BCRC 17069 / CCUG 31568 / BM 3577 / RP62A) protein is Tagatose-6-phosphate kinase.